A 673-amino-acid chain; its full sequence is DNA ligase (673 aa).

Residues 33 to 37 (DAEYD), 82 to 83 (SL), and glutamate 114 contribute to the NAD(+) site. Lysine 116 serves as the catalytic N6-AMP-lysine intermediate. Residues arginine 137, glutamate 174, lysine 291, and lysine 315 each coordinate NAD(+). Zn(2+) is bound by residues cysteine 409, cysteine 412, cysteine 427, and cysteine 433. The 82-residue stretch at 592–673 (AQEQPLAGLV…LINLLEQHNG (82 aa)) folds into the BRCT domain.

Belongs to the NAD-dependent DNA ligase family. LigA subfamily. It depends on Mg(2+) as a cofactor. Requires Mn(2+) as cofactor.

The enzyme catalyses NAD(+) + (deoxyribonucleotide)n-3'-hydroxyl + 5'-phospho-(deoxyribonucleotide)m = (deoxyribonucleotide)n+m + AMP + beta-nicotinamide D-nucleotide.. Functionally, DNA ligase that catalyzes the formation of phosphodiester linkages between 5'-phosphoryl and 3'-hydroxyl groups in double-stranded DNA using NAD as a coenzyme and as the energy source for the reaction. It is essential for DNA replication and repair of damaged DNA. This Pseudoalteromonas translucida (strain TAC 125) protein is DNA ligase.